The primary structure comprises 38 residues: Photosystem II reaction center protein L (38 aa).

The helical transmembrane segment at 17-37 (SLYWGLLLIFVLAILFSSYIF) threads the bilayer.

It belongs to the PsbL family. As to quaternary structure, PSII is composed of 1 copy each of membrane proteins PsbA, PsbB, PsbC, PsbD, PsbE, PsbF, PsbH, PsbI, PsbJ, PsbK, PsbL, PsbM, PsbT, PsbX, PsbY, PsbZ, Psb30/Ycf12, at least 3 peripheral proteins of the oxygen-evolving complex and a large number of cofactors. It forms dimeric complexes.

It is found in the plastid. The protein resides in the chloroplast thylakoid membrane. Its function is as follows. One of the components of the core complex of photosystem II (PSII). PSII is a light-driven water:plastoquinone oxidoreductase that uses light energy to abstract electrons from H(2)O, generating O(2) and a proton gradient subsequently used for ATP formation. It consists of a core antenna complex that captures photons, and an electron transfer chain that converts photonic excitation into a charge separation. This subunit is found at the monomer-monomer interface and is required for correct PSII assembly and/or dimerization. The chain is Photosystem II reaction center protein L from Mesostigma viride (Green alga).